The primary structure comprises 278 residues: Small ribosomal subunit protein uS2 (278 aa).

The segment at 233 to 257 is disordered; the sequence is IDMEAAGEAPANKGKKKSVKARLDK.

Belongs to the universal ribosomal protein uS2 family.

The protein is Small ribosomal subunit protein uS2 of Bacteroides thetaiotaomicron (strain ATCC 29148 / DSM 2079 / JCM 5827 / CCUG 10774 / NCTC 10582 / VPI-5482 / E50).